A 390-amino-acid chain; its full sequence is Putative methylesterase 11, chloroplastic (390 aa).

The transit peptide at 1-46 directs the protein to the chloroplast; sequence MGNLCSLFTPPKPVKKRKPITKRQSSIGASSSGSGLNSNRWNNRVR. Disordered regions lie at residues 1 to 52 and 94 to 119; these read MGNL…SSRR and QGSC…DPLL. Residues 25–48 show a composition bias toward low complexity; the sequence is SSIGASSSGSGLNSNRWNNRVRSS. A compositionally biased stretch (polar residues) spans 94 to 104; it reads QGSCSKKNQLP. The segment covering 105–114 has biased composition (low complexity); it reads RSSSSRSRSS. One can recognise an AB hydrolase-1 domain in the interval 137–241; it reads NHFVLVHGGS…KAVFLAAAML (105 aa). Asp213 functions as the Acyl-ester intermediate in the catalytic mechanism. Residues Asp339 and His367 each act as charge relay system in the active site.

Belongs to the AB hydrolase superfamily. Methylesterase family.

Its subcellular location is the plastid. The protein localises to the chloroplast. Functionally, putative methylesterase. In Arabidopsis thaliana (Mouse-ear cress), this protein is Putative methylesterase 11, chloroplastic.